A 397-amino-acid chain; its full sequence is L-cysteine desulfidase (397 aa).

Cys23 (proton acceptor) is an active-site residue. [4Fe-4S] cluster-binding residues include Cys288, Cys330, and Cys337.

This sequence belongs to the L-cysteine desulfidase family. As to quaternary structure, homotrimer. [4Fe-4S] cluster is required as a cofactor.

The catalysed reaction is L-cysteine + H2O = hydrogen sulfide + pyruvate + NH4(+) + H(+). Catalyzes the cleavage of L-cysteine to form 2-aminoprop-2-enoate and sulfide. The former then spontaneously hydrolyzes to pyruvate and NH(3). May be responsible for the production of sulfide required for the biosynthesis of iron-sulfur centers in this archaea. The protein is L-cysteine desulfidase of Methanococcus maripaludis (strain C5 / ATCC BAA-1333).